Here is a 92-residue protein sequence, read N- to C-terminus: Small ribosomal subunit protein uS19 (92 aa).

It belongs to the universal ribosomal protein uS19 family.

Its function is as follows. Protein S19 forms a complex with S13 that binds strongly to the 16S ribosomal RNA. This Rickettsia akari (strain Hartford) protein is Small ribosomal subunit protein uS19.